Consider the following 92-residue polypeptide: Protein LSO2 (92 aa).

2 stretches are compositionally biased toward basic and acidic residues: residues 1–10 (MGKRFSESAA) and 38–72 (EASK…ERDA). The tract at residues 1–92 (MGKRFSESAA…KGGKGKRKMK (92 aa)) is disordered. The stretch at 17-80 (ARKRDQAHAK…DALLTAEEEQ (64 aa)) forms a coiled coil.

Belongs to the CCDC124 family. As to quaternary structure, associates with translationally inactive ribosomes in the nonrotated state. LSO2 bridges the decoding sites of the small with the GTPase activating center (GAC) of the large subunit. This position allows accommodation of the DOM34-dependent ribosome recycling system, which splits LSO2-containing ribosomes.

It localises to the nucleus. It is found in the cytoplasm. Ribosome-binding protein involved in ribosome hibernation by associating with translationally inactive ribosomes. Required for translational recovery after starvation from stationary phase. May facilitate rapid translation reactivation by stabilizing the recycling-competent state of inactive ribosomes. This is Protein LSO2 from Saccharomyces cerevisiae (strain ATCC 204508 / S288c) (Baker's yeast).